The following is a 221-amino-acid chain: Endo-1,4-beta-xylanase 11A (221 aa).

The first 18 residues, 1–18, serve as a signal peptide directing secretion; the sequence is MKFATVLAFATAAGAAFA. One can recognise a GH11 domain in the interval 23 to 220; sequence SSETTEAGQL…GTGSASMSVS (198 aa). Residue Glu111 is the Nucleophile of the active site. Residue Asn117 is glycosylated (N-linked (GlcNAc...) asparagine). Glu207 functions as the Proton donor in the catalytic mechanism.

This sequence belongs to the glycosyl hydrolase 11 (cellulase G) family.

Its subcellular location is the secreted. It catalyses the reaction Endohydrolysis of (1-&gt;4)-beta-D-xylosidic linkages in xylans.. It participates in glycan degradation; xylan degradation. In terms of biological role, endo-1,4-beta-xylanase involved in the hydrolysis of xylan, a major structural heterogeneous polysaccharide found in plant biomass representing the second most abundant polysaccharide in the biosphere, after cellulose. The polypeptide is Endo-1,4-beta-xylanase 11A (XYN11A) (Mycosarcoma maydis (Corn smut fungus)).